We begin with the raw amino-acid sequence, 270 residues long: MENPVLIQKAPRRYKSAIPLFLFHDGGGTVLPYYFLESLNRNVWGVSYPHLNDGGTFEHGIKGMGELYAGYIRGKVSRGKVLLGGWSAGGSIAIQVAKCLENIPELCVAGIILLDTPFPDFPDWRPKNSPPVQFHIPVVPDQTAKSRLAQQQAVNDIIHALSVWELPTWENGRRPPPAVFIRALKVVPTEKVVEVDWFREEYALGWQKYPYNFIVEELRVDGDHFSIFTPSYLPELSTKLREALDLLDSKPETGILLDSKLNSSIVISAL.

The protein belongs to the AMT4 thioesterase family.

The protein operates within polyketide biosynthesis. In terms of biological role, probable thioesterase; part of the gene cluster B that mediates the biosynthesis of botcinic acid and its botcinin derivatives, acetate-derived polyketides that contribute to virulence when combined with the sesquiterpene botrydial. Botcinic acid and its derivatives have been shown to induce chlorosis and necrosis during host plant infection, but also have antifungal activities. Two polyketide synthases, BOA6 and BOA9, are involved in the biosynthesis of botcinins. BOA6 mediates the formation of the per-methylated tetraketide core by condensation of four units of malonyl-CoA with one unit of acetyl-CoA, which would be methylated in activated methylene groups to yield a bicyclic acid intermediate that could then either be converted to botrylactone derivatives or lose the starter acetate unit through a retro-Claisen type C-C bond cleavage to yield botcinin derivatives. The second polyketide synthase, BOA9, is probably required for the biosynthesis of the tetraketide side chain of botcinins. The methyltransferase (MT) domain within BOA6 is probably responsible for the incorporation of four methyl groups. The trans-enoyl reductase BOA5 might take over the enoyl reductase function of BOA6 that misses an ER domain. The monooxygenases BOA2, BOA3 and BOA4 might be involved in further hydroxylations at C4, C5 and C8, whereas BOA7, close to BOA9, could potentially be involved in the hydroxylation at C4 in the side chain of botcinins. This chain is Probable thioesterase BOA10, found in Botryotinia fuckeliana (strain B05.10) (Noble rot fungus).